The chain runs to 406 residues: Phosphatidylinositol 5-phosphate 4-kinase type-2 alpha (406 aa).

Alanine 2 is subject to N-acetylalanine. At threonine 3 the chain carries Phosphothreonine. Position 14 is a phosphoserine (serine 14). In terms of domain architecture, PIPK spans 33-405 (ASDPLLSVLM…RFLDFIGHIL (373 aa)). The tract at residues 59–65 (VMLMPDD) is required for interaction with PIP5K1A. 2 positions are modified to N6-acetyllysine: lysine 89 and lysine 145. Residues 288–329 (QEEVECEENDGEEEGESDGTHPVGTPPDSPGNTLNSSPPLAP) are disordered. Positions 289 to 304 (EEVECEENDGEEEGES) are enriched in acidic residues.

In terms of assembly, homodimer. Interacts with PIP4K2B; the interaction may regulate localization to the nucleus. Probably interacts with PIP5K1A; the interaction inhibits PIP5K1A kinase activity. Phosphorylated in tyrosines. Phosphorylation is induced by light and increases kinase activity. Expressed ubiquitously, with high levels in the brain. Present in most tissues, except notably skeletal muscle and small intestine.

Its subcellular location is the cell membrane. It is found in the nucleus. The protein localises to the lysosome. It localises to the cytoplasm. The protein resides in the photoreceptor inner segment. Its subcellular location is the cell projection. It is found in the cilium. The protein localises to the photoreceptor outer segment. The catalysed reaction is a 1,2-diacyl-sn-glycero-3-phospho-(1D-myo-inositol-5-phosphate) + ATP = a 1,2-diacyl-sn-glycero-3-phospho-(1D-myo-inositol-4,5-bisphosphate) + ADP + H(+). It carries out the reaction 1,2-dihexadecanoyl-sn-glycero-3-phospho-(1D-myo-inositol-5-phosphate) + ATP = 1,2-dihexadecanoyl-sn-glycero-3-phospho-(1D-myo-inositol-4,5-bisphosphate) + ADP + H(+). It catalyses the reaction 1,2-dihexadecanoyl-sn-glycero-3-phospho-(1D-myo-inositol-5-phosphate) + GTP = 1,2-dihexadecanoyl-sn-glycero-3-phospho-(1D-myo-inositol-4,5-bisphosphate) + GDP + H(+). In rod outer segments, activated by light. Inhibited by I-OMe tyrphostin AG-538 (I-OMe-AG-538), acting as an ATP-competitive inhibitor. Its function is as follows. Catalyzes the phosphorylation of phosphatidylinositol 5-phosphate (PtdIns5P) on the fourth hydroxyl of the myo-inositol ring, to form phosphatidylinositol 4,5-bisphosphate (PtdIns(4,5)P2). Has both ATP- and GTP-dependent kinase activities. May exert its function by regulating the levels of PtdIns5P, which functions in the cytosol by increasing AKT activity and in the nucleus signals through ING2. May regulate the pool of cytosolic PtdIns5P in response to the activation of tyrosine phosphorylation. Required for lysosome-peroxisome membrane contacts and intracellular cholesterol transport through modulating peroxisomal PtdIns(4,5)P2 level. In collaboration with PIP4K2B, has a role in mediating autophagy in times of nutrient stress. Required for autophagosome-lysosome fusion and the regulation of cellular lipid metabolism. May be involved in thrombopoiesis, and the terminal maturation of megakaryocytes and regulation of their size. Negatively regulates insulin signaling through a catalytic-independent mechanism. PIP4Ks interact with PIP5Ks and suppress PIP5K-mediated PtdIns(4,5)P2 synthesis and insulin-dependent conversion to PtdIns(3,4,5)P3. The protein is Phosphatidylinositol 5-phosphate 4-kinase type-2 alpha of Homo sapiens (Human).